The following is a 585-amino-acid chain: Urease subunit alpha (585 aa).

One can recognise a Urease domain in the interval 132 to 585; it reads GGIDTHIHFI…LPMAQRYFLF (454 aa). Ni(2+) contacts are provided by histidine 137, histidine 139, and lysine 220. Lysine 220 is modified (N6-carboxylysine). Histidine 222 contacts substrate. Residues histidine 249 and histidine 275 each contribute to the Ni(2+) site. Catalysis depends on histidine 323, which acts as the Proton donor. Aspartate 363 serves as a coordination point for Ni(2+).

It belongs to the metallo-dependent hydrolases superfamily. Urease alpha subunit family. In terms of assembly, heterotrimer of UreA (gamma), UreB (beta) and UreC (alpha) subunits. Three heterotrimers associate to form the active enzyme. It depends on Ni cation as a cofactor. Carboxylation allows a single lysine to coordinate two nickel ions.

The protein localises to the cytoplasm. The enzyme catalyses urea + 2 H2O + H(+) = hydrogencarbonate + 2 NH4(+). Its pathway is nitrogen metabolism; urea degradation; CO(2) and NH(3) from urea (urease route): step 1/1. In Pseudarthrobacter chlorophenolicus (strain ATCC 700700 / DSM 12829 / CIP 107037 / JCM 12360 / KCTC 9906 / NCIMB 13794 / A6) (Arthrobacter chlorophenolicus), this protein is Urease subunit alpha.